A 705-amino-acid polypeptide reads, in one-letter code: Calpastatin (705 aa).

2 disordered regions span residues 1–211 and 226–493; these read MNPT…PNDA and LTTC…PLPP. Composition is skewed to basic and acidic residues over residues 7–17 and 24–62; these read KAVKTEPEKKP and VVHEKKTQEVKPKEHTEPKSLPKHSSDTGVKHAPKEKAV. K10 participates in a covalent cross-link: Glycyl lysine isopeptide (Lys-Gly) (interchain with G-Cter in SUMO2). K28 is subject to N6-acetyllysine. 2 stretches are compositionally biased toward low complexity: residues 63-72 and 94-103; these read SKSSEQPPSE and PAAAAAASAE. Residue S65 is modified to Phosphoserine. T115 is modified (phosphothreonine). Residues 135–151 are compositionally biased toward acidic residues; sequence TALDDLIDTLGEPEEMK. An Inhibitory domain 1 repeat occupies 149-202; that stretch reads EMKEDNTTYTGPEVSDPMSSTYIEELGKRESTPPPKYKELLNKEEGIAGPPPDS. Basic and acidic residues predominate over residues 173-194; that stretch reads ELGKRESTPPPKYKELLNKEEG. Residues S202 and S230 each carry the phosphoserine modification. The segment covering 234 to 248 has biased composition (basic and acidic residues); the sequence is DGKETEKEKSTEEAL. Polar residues predominate over residues 275–286; sequence TEQALQALSASL. Basic and acidic residues-rich tracts occupy residues 289–317 and 327–352; these read RKPEPELDPSSIREVDEAKAKEEKVKKCG and YRLKPATDKDGKPLLPEAEEKPKPLS. The Inhibitory domain 2 repeat unit spans residues 292–344; it reads EPELDPSSIREVDEAKAKEEKVKKCGEDEETVPSEYRLKPATDKDGKPLLPEA. Phosphoserine occurs at positions 352, 354, and 361. Over residues 355 to 364 the composition is skewed to acidic residues; the sequence is ELIDELSEDF. Positions 365–381 are enriched in basic and acidic residues; sequence DQSKPTEKQSKPTEKTE. The residue at position 428 (S428) is a Phosphoserine. Positions 430–489 are enriched in basic and acidic residues; it reads PKKEADPEDGKPVEDKVKEKAKEEDRENFGEKEETIPPDYRLEEAKDKDGKPLLPKEVKE. One copy of the Inhibitory domain 3 repeat lies at 434–487; sequence ADPEDGKPVEDKVKEKAKEEDRENFGEKEETIPPDYRLEEAKDKDGKPLLPKEV. Phosphoserine is present on residues S504 and S515. The disordered stretch occupies residues 527–705; the sequence is VSEVVSQTPA…KPKADGKSTS (179 aa). The span at 533-542 shows a compositional bias: low complexity; that stretch reads QTPAPTTQAA. S563 is modified (phosphoserine). Residues 571 to 624 form an Inhibitory domain 4 repeat; that stretch reads PDPDENKPVEDKVKEKAKAEHRDKLGERDDTIPPKYQHLLDDNKEGTPGKPKDQ. The span at 571 to 625 shows a compositional bias: basic and acidic residues; the sequence is PDPDENKPVEDKVKEKAKAEHRDKLGERDDTIPPKYQHLLDDNKEGTPGKPKDQR. A compositionally biased stretch (low complexity) spans 651-662; the sequence is DSCPSTTETSTD. Basic and acidic residues predominate over residues 683–705; the sequence is KAKDSTKAKEETSKPKADGKSTS.

The protein belongs to the protease inhibitor I27 (calpastatin) family.

Its function is as follows. Specific inhibition of calpain (calcium-dependent cysteine protease). Plays a key role in postmortem tenderization of meat and have been proposed to be involved in muscle protein degradation in living tissue. This chain is Calpastatin (CAST), found in Bos taurus (Bovine).